Consider the following 348-residue polypeptide: Photosystem II protein D1 (348 aa).

Helical transmembrane passes span 33–50, 122–137, and 146–160; these read YIGW…LATV, HFIF…EWEF, and WIFV…AASA. Residue His-122 coordinates chlorophyll a. Residue Tyr-130 participates in pheophytin a binding. 2 residues coordinate [CaMn4O5] cluster: Asp-174 and Glu-193. The chain crosses the membrane as a helical span at residues 201–222; the sequence is FHILGVAAVFGGSLFSAMHGSL. Chlorophyll a is bound at residue His-202. A quinone-binding positions include His-219 and 268–269; that span reads SF. His-219 is a binding site for Fe cation. His-276 serves as a coordination point for Fe cation. Residues 278–292 traverse the membrane as a helical segment; that stretch reads FLAAWPVIGIWFTSL. 4 residues coordinate [CaMn4O5] cluster: His-336, Glu-337, Asp-346, and Ala-348.

It belongs to the reaction center PufL/M/PsbA/D family. PSII is composed of 1 copy each of membrane proteins PsbA, PsbB, PsbC, PsbD, PsbE, PsbF, PsbH, PsbI, PsbJ, PsbK, PsbL, PsbM, PsbT, PsbX, PsbY, PsbZ, Psb30/Ycf12, at least 3 peripheral proteins of the oxygen-evolving complex and a large number of cofactors. It forms dimeric complexes. It depends on The D1/D2 heterodimer binds P680, chlorophylls that are the primary electron donor of PSII, and subsequent electron acceptors. It shares a non-heme iron and each subunit binds pheophytin, quinone, additional chlorophylls, carotenoids and lipids. D1 provides most of the ligands for the Mn4-Ca-O5 cluster of the oxygen-evolving complex (OEC). There is also a Cl(-1) ion associated with D1 and D2, which is required for oxygen evolution. The PSII complex binds additional chlorophylls, carotenoids and specific lipids. as a cofactor. Tyr-165 forms a radical intermediate that is referred to as redox-active TyrZ, YZ or Y-Z.

The protein resides in the plastid. It is found in the chloroplast thylakoid membrane. The catalysed reaction is 2 a plastoquinone + 4 hnu + 2 H2O = 2 a plastoquinol + O2. In terms of biological role, photosystem II (PSII) is a light-driven water:plastoquinone oxidoreductase that uses light energy to abstract electrons from H(2)O, generating O(2) and a proton gradient subsequently used for ATP formation. It consists of a core antenna complex that captures photons, and an electron transfer chain that converts photonic excitation into a charge separation. The D1/D2 (PsbA/PsbD) reaction center heterodimer binds P680, the primary electron donor of PSII as well as several subsequent electron acceptors. In Heterocapsa triquetra (Dinoflagellate), this protein is Photosystem II protein D1.